We begin with the raw amino-acid sequence, 134 residues long: Small ribosomal subunit protein uS11 (134 aa).

Polar residues predominate over residues 113 to 122 (SSITDATPQP). Positions 113-134 (SSITDATPQPHNGCRPTKRRKV) are disordered.

Belongs to the universal ribosomal protein uS11 family. As to quaternary structure, part of the 30S ribosomal subunit. Interacts with proteins S7 and S18. Binds to IF-3.

Functionally, located on the platform of the 30S subunit, it bridges several disparate RNA helices of the 16S rRNA. Forms part of the Shine-Dalgarno cleft in the 70S ribosome. The protein is Small ribosomal subunit protein uS11 of Corynebacterium aurimucosum (strain ATCC 700975 / DSM 44827 / CIP 107346 / CN-1) (Corynebacterium nigricans).